The primary structure comprises 465 residues: Lactaldehyde dehydrogenase (465 aa).

Gly-220–Gly-225 contributes to the NAD(+) binding site. Catalysis depends on residues Glu-240 and Cys-274.

Belongs to the aldehyde dehydrogenase family. As to quaternary structure, homotetramer.

The catalysed reaction is (S)-lactaldehyde + NAD(+) + H2O = (S)-lactate + NADH + 2 H(+). The protein operates within cofactor biosynthesis; coenzyme F420 biosynthesis. In terms of biological role, involved in F420 biosynthesis through the oxidation of lactaldehyde to lactate. The chain is Lactaldehyde dehydrogenase from Methanococcus maripaludis (strain C7 / ATCC BAA-1331).